The chain runs to 476 residues: Aspartyl/glutamyl-tRNA(Asn/Gln) amidotransferase subunit B (476 aa).

This sequence belongs to the GatB/GatE family. GatB subfamily. As to quaternary structure, heterotrimer of A, B and C subunits.

The catalysed reaction is L-glutamyl-tRNA(Gln) + L-glutamine + ATP + H2O = L-glutaminyl-tRNA(Gln) + L-glutamate + ADP + phosphate + H(+). The enzyme catalyses L-aspartyl-tRNA(Asn) + L-glutamine + ATP + H2O = L-asparaginyl-tRNA(Asn) + L-glutamate + ADP + phosphate + 2 H(+). Its function is as follows. Allows the formation of correctly charged Asn-tRNA(Asn) or Gln-tRNA(Gln) through the transamidation of misacylated Asp-tRNA(Asn) or Glu-tRNA(Gln) in organisms which lack either or both of asparaginyl-tRNA or glutaminyl-tRNA synthetases. The reaction takes place in the presence of glutamine and ATP through an activated phospho-Asp-tRNA(Asn) or phospho-Glu-tRNA(Gln). The polypeptide is Aspartyl/glutamyl-tRNA(Asn/Gln) amidotransferase subunit B (Listeria welshimeri serovar 6b (strain ATCC 35897 / DSM 20650 / CCUG 15529 / CIP 8149 / NCTC 11857 / SLCC 5334 / V8)).